We begin with the raw amino-acid sequence, 325 residues long: Glutarate 2-hydroxylase (325 aa).

Residues His-160, Asp-162, and His-292 each coordinate Fe cation.

This sequence belongs to the glutarate hydroxylase family. In terms of assembly, homotetramer. It depends on Fe(2+) as a cofactor.

The catalysed reaction is glutarate + 2-oxoglutarate + O2 = (S)-2-hydroxyglutarate + succinate + CO2. It functions in the pathway amino-acid degradation. In terms of biological role, acts as an alpha-ketoglutarate-dependent dioxygenase catalyzing hydroxylation of glutarate (GA) to L-2-hydroxyglutarate (L2HG). Functions in a L-lysine degradation pathway that proceeds via cadaverine, glutarate and L-2-hydroxyglutarate. This chain is Glutarate 2-hydroxylase, found in Klebsiella pneumoniae (strain 342).